A 599-amino-acid chain; its full sequence is Zinc metalloproteinase dpy-31 (599 aa).

A signal peptide spans 1-22 (MALLKPFLSRTFSSFFATITGG). The propeptide occupies 23–211 (RNLIDSIEEL…IQHGRRTKRK (189 aa)). The Peptidase M12A domain maps to 211 to 410 (KFIRSELRRW…IRLMNVIYCS (200 aa)). N-linked (GlcNAc...) asparagine glycosylation is present at asparagine 251. Intrachain disulfides connect cysteine 254–cysteine 409, cysteine 277–cysteine 298, cysteine 413–cysteine 433, cysteine 435–cysteine 444, and cysteine 455–cysteine 483. Histidine 306 is a binding site for Zn(2+). Residue glutamate 307 is part of the active site. Residues histidine 310 and histidine 316 each contribute to the Zn(2+) site. One can recognise an EGF-like domain in the interval 405–445 (NVIYCSDSCAQKLPCQRGGYTDPRRCGRCRCPDGFTGKLCE). Residues 455–571 (CGGRIELTSS…KGFQAQVRAL (117 aa)) form the CUB domain. Asparagine 522 is a glycosylation site (N-linked (GlcNAc...) asparagine).

Requires Zn(2+) as cofactor.

The protein resides in the secreted. With respect to regulation, inhibited by marimastat and tripeptide hydroxamic acids. Its function is as follows. Metalloprotease which cleaves the carboxyl terminus of procollagens to mature collagens. Probably involved in cuticular collagen maturation. This is Zinc metalloproteinase dpy-31 from Brugia malayi (Filarial nematode worm).